The primary structure comprises 358 residues: Probable cinnamyl alcohol dehydrogenase (358 aa).

Position 48 (cysteine 48) interacts with Zn(2+). Serine 50 is a binding site for NADP(+). Zn(2+) contacts are provided by histidine 70, glutamate 71, cysteine 101, cysteine 104, cysteine 107, cysteine 115, and cysteine 164. NADP(+)-binding positions include threonine 168, 189–194, 212–217, threonine 252, glycine 276, and 299–301; these read GLGGVG, SSSDKK, and SFV.

This sequence belongs to the zinc-containing alcohol dehydrogenase family. As to quaternary structure, homodimer. Zn(2+) serves as cofactor. As to expression, most actively expressed in stem, hypocotyl and root tissue.

The enzyme catalyses (E)-cinnamyl alcohol + NADP(+) = (E)-cinnamaldehyde + NADPH + H(+). The catalysed reaction is (E)-coniferol + NADP(+) = (E)-coniferaldehyde + NADPH + H(+). It carries out the reaction (E)-sinapyl alcohol + NADP(+) = (E)-sinapaldehyde + NADPH + H(+). It catalyses the reaction (E)-4-coumaroyl alcohol + NADP(+) = (E)-4-coumaraldehyde + NADPH + H(+). The enzyme catalyses (E)-caffeyl alcohol + NADP(+) = (E)-caffeyl aldehyde + NADPH + H(+). It participates in aromatic compound metabolism; phenylpropanoid biosynthesis. In terms of biological role, this protein catalyzes the final step in a branch of phenylpropanoid synthesis specific for production of lignin monomers. It acts on coniferyl-, sinapyl-, 4-coumaryl- and cinnamyl-alcohol. In Medicago sativa (Alfalfa), this protein is Probable cinnamyl alcohol dehydrogenase (CAD2).